The following is an 88-amino-acid chain: UPF0367 protein syc2447_c (88 aa).

It belongs to the UPF0367 family.

This chain is UPF0367 protein syc2447_c, found in Synechococcus sp. (strain ATCC 27144 / PCC 6301 / SAUG 1402/1) (Anacystis nidulans).